A 513-amino-acid polypeptide reads, in one-letter code: Light-independent protochlorophyllide reductase subunit B (513 aa).

Residue Asp36 participates in [4Fe-4S] cluster binding. Asp274 serves as the catalytic Proton donor. 409 to 410 (GL) contacts substrate. The segment at 426–457 (DAAGPSHHGGHSPKPQAAEPAPQAAPQPENTG) is disordered. Residues 440–454 (PQAAEPAPQAAPQPE) show a composition bias toward low complexity.

This sequence belongs to the ChlB/BchB/BchZ family. As to quaternary structure, protochlorophyllide reductase is composed of three subunits; BchL, BchN and BchB. Forms a heterotetramer of two BchB and two BchN subunits. [4Fe-4S] cluster serves as cofactor.

The catalysed reaction is chlorophyllide a + oxidized 2[4Fe-4S]-[ferredoxin] + 2 ADP + 2 phosphate = protochlorophyllide a + reduced 2[4Fe-4S]-[ferredoxin] + 2 ATP + 2 H2O. It participates in porphyrin-containing compound metabolism; bacteriochlorophyll biosynthesis (light-independent). Its function is as follows. Component of the dark-operative protochlorophyllide reductase (DPOR) that uses Mg-ATP and reduced ferredoxin to reduce ring D of protochlorophyllide (Pchlide) to form chlorophyllide a (Chlide). This reaction is light-independent. The NB-protein (BchN-BchB) is the catalytic component of the complex. The polypeptide is Light-independent protochlorophyllide reductase subunit B (Roseobacter denitrificans (strain ATCC 33942 / OCh 114) (Erythrobacter sp. (strain OCh 114))).